A 213-amino-acid polypeptide reads, in one-letter code: MAETYDFLFKFLVIGSAGTGKSCLLHQFIENKFKQDSNHTIGVEFGSRVVNVGGKTVKLQIWDTAGQERFRSVTRSYYRGAAGALLVYDITSRETYNSLAAWLTDARTLASPNIVVILCGNKKDLDPEREVTFLEASRFAQENELMFLETSALTGENVEEAFLKCARTILNKIDSGELDPERMGSGIQYGDASLRQLRQPRSAQAVAPQPCGC.

Ala-2 carries the post-translational modification N-acetylalanine. GDP-binding residues include Gly-18, Thr-19, Gly-20, Lys-21, Ser-22, and Cys-23. 9 residues coordinate GTP: Gly-18, Thr-19, Gly-20, Lys-21, Ser-22, Cys-23, Ser-37, His-39, and Thr-40. Mg(2+) is bound at residue Ser-22. The Switch 1 motif lies at 39–44; that stretch reads HTIGVE. Mg(2+)-binding residues include Thr-40 and Asp-63. The short motif at 65–74 is the Switch 2 element; sequence AGQERFRSVT. Gly-66 lines the GTP pocket. A 5-glutamyl serotonin modification is found at Gln-67. 5 residues coordinate GDP: Asn-121, Lys-122, Asp-124, Ala-152, and Leu-153. The GTP site is built by Asn-121, Lys-122, Asp-124, Ala-152, and Leu-153. Ser-185 and Ser-193 each carry phosphoserine. 2 S-geranylgeranyl cysteine lipidation sites follow: Cys-211 and Cys-213. A Cysteine methyl ester modification is found at Cys-213.

It belongs to the small GTPase superfamily. Rab family. As to quaternary structure, interacts (GTP-bound form) with RUFY1; the interaction allows endosomal tethering and fusion. It depends on Mg(2+) as a cofactor. Serotonylation of Gln-67 by TGM2 during activation and aggregation of platelets leads to constitutive activation of GTPase activity.

Its subcellular location is the cell membrane. It localises to the early endosome membrane. It catalyses the reaction GTP + H2O = GDP + phosphate + H(+). With respect to regulation, regulated by guanine nucleotide exchange factors (GEFs) which promote the exchange of bound GDP for free GTP. Regulated by GTPase activating proteins (GAPs) which increase the GTP hydrolysis activity. Inhibited by GDP dissociation inhibitors (GDIs). Its function is as follows. The small GTPases Rab are key regulators of intracellular membrane trafficking, from the formation of transport vesicles to their fusion with membranes. Rabs cycle between an inactive GDP-bound form and an active GTP-bound form that is able to recruit to membranes different set of downstream effectors directly responsible for vesicle formation, movement, tethering and fusion. RAB4B mediates endosomal tethering and fusion through the interaction with RUFY1 and RAB14. Acts as a regulator of platelet alpha-granule release during activation and aggregation of platelets. This is Ras-related protein Rab-4B from Homo sapiens (Human).